The primary structure comprises 344 residues: UDP-N-acetylenolpyruvoylglucosamine reductase (344 aa).

The 171-residue stretch at 19-189 (INVTAKKIIF…IAVGIKIKKN (171 aa)) folds into the FAD-binding PCMH-type domain. Residue R165 is part of the active site. The Proton donor role is filled by S235. E331 is a catalytic residue.

This sequence belongs to the MurB family. FAD is required as a cofactor.

It localises to the cytoplasm. The catalysed reaction is UDP-N-acetyl-alpha-D-muramate + NADP(+) = UDP-N-acetyl-3-O-(1-carboxyvinyl)-alpha-D-glucosamine + NADPH + H(+). It functions in the pathway cell wall biogenesis; peptidoglycan biosynthesis. Functionally, cell wall formation. In Buchnera aphidicola subsp. Schizaphis graminum (strain Sg), this protein is UDP-N-acetylenolpyruvoylglucosamine reductase.